A 116-amino-acid polypeptide reads, in one-letter code: Large ribosomal subunit protein bL20 (116 aa).

The protein belongs to the bacterial ribosomal protein bL20 family.

Functionally, binds directly to 23S ribosomal RNA and is necessary for the in vitro assembly process of the 50S ribosomal subunit. It is not involved in the protein synthesizing functions of that subunit. This chain is Large ribosomal subunit protein bL20, found in Nitratiruptor sp. (strain SB155-2).